Reading from the N-terminus, the 163-residue chain is Phosphopantetheine adenylyltransferase (163 aa).

T10 is a substrate binding site. ATP contacts are provided by residues 10 to 11 and H18; that span reads TF. K42, L74, and R88 together coordinate substrate. ATP-binding positions include 89-91, E99, and 124-130; these read GLR and NSFISST.

It belongs to the bacterial CoaD family. In terms of assembly, homohexamer. Mg(2+) is required as a cofactor.

It is found in the cytoplasm. It catalyses the reaction (R)-4'-phosphopantetheine + ATP + H(+) = 3'-dephospho-CoA + diphosphate. Its pathway is cofactor biosynthesis; coenzyme A biosynthesis; CoA from (R)-pantothenate: step 4/5. In terms of biological role, reversibly transfers an adenylyl group from ATP to 4'-phosphopantetheine, yielding dephospho-CoA (dPCoA) and pyrophosphate. The sequence is that of Phosphopantetheine adenylyltransferase from Shewanella oneidensis (strain ATCC 700550 / JCM 31522 / CIP 106686 / LMG 19005 / NCIMB 14063 / MR-1).